Reading from the N-terminus, the 661-residue chain is Transketolase (661 aa).

Histidine 28 contacts substrate. Thiamine diphosphate-binding positions include histidine 68 and 116–118 (GPL). Position 157 (glutamate 157) interacts with Mg(2+). Residues glycine 158 and asparagine 187 each contribute to the thiamine diphosphate site. Residues asparagine 187 and isoleucine 189 each coordinate Mg(2+). Substrate is bound by residues histidine 261 and arginine 358. Histidine 261 provides a ligand contact to thiamine diphosphate. The active-site Proton donor is the glutamate 412. Position 438 (phenylalanine 438) interacts with thiamine diphosphate. Substrate-binding residues include histidine 462, aspartate 470, and arginine 521.

This sequence belongs to the transketolase family. Homodimer. Requires Mg(2+) as cofactor. Ca(2+) is required as a cofactor. Mn(2+) serves as cofactor. It depends on Co(2+) as a cofactor. The cofactor is thiamine diphosphate.

The catalysed reaction is D-sedoheptulose 7-phosphate + D-glyceraldehyde 3-phosphate = aldehydo-D-ribose 5-phosphate + D-xylulose 5-phosphate. Catalyzes the transfer of a two-carbon ketol group from a ketose donor to an aldose acceptor, via a covalent intermediate with the cofactor thiamine pyrophosphate. In Treponema pallidum (strain Nichols), this protein is Transketolase (tkt).